The chain runs to 113 residues: Ribonuclease P protein component (113 aa).

The protein belongs to the RnpA family. Consists of a catalytic RNA component (M1 or rnpB) and a protein subunit.

The catalysed reaction is Endonucleolytic cleavage of RNA, removing 5'-extranucleotides from tRNA precursor.. In terms of biological role, RNaseP catalyzes the removal of the 5'-leader sequence from pre-tRNA to produce the mature 5'-terminus. It can also cleave other RNA substrates such as 4.5S RNA. The protein component plays an auxiliary but essential role in vivo by binding to the 5'-leader sequence and broadening the substrate specificity of the ribozyme. The polypeptide is Ribonuclease P protein component (Vesicomyosocius okutanii subsp. Calyptogena okutanii (strain HA)).